A 332-amino-acid polypeptide reads, in one-letter code: L-lactate dehydrogenase A chain (332 aa).

A2 bears the N-acetylalanine mark. K5 carries the post-translational modification N6-acetyllysine; alternate. K5 bears the N6-succinyllysine; alternate mark. K14 carries the post-translational modification N6-acetyllysine. The residue at position 18 (T18) is a Phosphothreonine. NAD(+) is bound at residue 29–57; the sequence is GAVGMACAISILMKDLADELALVDVIEDK. Position 57 is an N6-acetyllysine; alternate (K57). Residue K57 forms a Glycyl lysine isopeptide (Lys-Gly) (interchain with G-Cter in SUMO2); alternate linkage. K81 bears the N6-acetyllysine mark. Residue R99 coordinates NAD(+). R106 contributes to the substrate binding site. K118 carries the N6-acetyllysine; alternate modification. K118 carries the N6-succinyllysine; alternate modification. K126 carries the post-translational modification N6-acetyllysine. Position 138 (N138) interacts with NAD(+). N138 and R169 together coordinate substrate. H193 acts as the Proton acceptor in catalysis. Residues K224 and K232 each carry the N6-acetyllysine modification. A Phosphotyrosine modification is found at Y239. K243 is subject to N6-acetyllysine. T248 is a substrate binding site. A Phosphothreonine modification is found at T309. K318 carries the post-translational modification N6-acetyllysine; alternate. Position 318 is an N6-succinyllysine; alternate (K318). T322 is modified (phosphothreonine).

It belongs to the LDH/MDH superfamily. LDH family. Homotetramer. Interacts with PTEN upstream reading frame protein MP31. In terms of processing, ISGylated.

Its subcellular location is the cytoplasm. It carries out the reaction (S)-lactate + NAD(+) = pyruvate + NADH + H(+). It participates in fermentation; pyruvate fermentation to lactate; (S)-lactate from pyruvate: step 1/1. In terms of biological role, interconverts simultaneously and stereospecifically pyruvate and lactate with concomitant interconversion of NADH and NAD(+). In Macaca fascicularis (Crab-eating macaque), this protein is L-lactate dehydrogenase A chain (LDHA).